Consider the following 583-residue polypeptide: Nuclear hormone receptor family member nhr-31 (583 aa).

The segment at 43-77 is disordered; the sequence is DLRTSGATSSSGPATSYIIRPSDKQPTVSSGGSQN. Positions 46 to 58 are enriched in low complexity; sequence TSGATSSSGPATS. Over residues 66 to 77 the composition is skewed to polar residues; that stretch reads KQPTVSSGGSQN. A DNA-binding region (nuclear receptor) is located at residues 79–154; sequence DSVCAVCGDG…AGMDPKAVRP (76 aa). NR C4-type zinc fingers lie at residues 82 to 102 and 118 to 142; these read CAVCGDGIAKLHYGVLACYGC and CRFSNNCIVDKFQRNSCRYCRFQRC. In terms of domain architecture, NR LBD spans 195 to 464; that stretch reads ETRILLMQLM…DNLLAEMFGD (270 aa).

It belongs to the nuclear hormone receptor family.

It is found in the nucleus. In terms of biological role, orphan nuclear receptor. The polypeptide is Nuclear hormone receptor family member nhr-31 (nhr-31) (Caenorhabditis elegans).